Here is an 86-residue protein sequence, read N- to C-terminus: UPF0297 protein STH1998 (86 aa).

Belongs to the UPF0297 family.

In Symbiobacterium thermophilum (strain DSM 24528 / JCM 14929 / IAM 14863 / T), this protein is UPF0297 protein STH1998.